Reading from the N-terminus, the 68-residue chain is Cytochrome c3 (68 aa).

Heme-binding residues include histidine 17, histidine 20, cysteine 26, cysteine 29, histidine 30, histidine 45, cysteine 49, cysteine 52, histidine 53, cysteine 62, cysteine 65, and histidine 66.

In terms of processing, binds 3 heme groups per subunit.

Functionally, participates in sulfate respiration coupled with phosphorylation by transferring electrons from the enzyme dehydrogenase to ferredoxin. This Desulfuromonas acetoxidans (Chloropseudomonas ethylica) protein is Cytochrome c3 (cyd).